The sequence spans 61 residues: Small ribosomal subunit protein uS14 (61 aa).

The Zn(2+) site is built by Cys24, Cys27, Cys40, and Cys43.

It belongs to the universal ribosomal protein uS14 family. Zinc-binding uS14 subfamily. As to quaternary structure, part of the 30S ribosomal subunit. Contacts proteins S3 and S10. Zn(2+) is required as a cofactor.

Binds 16S rRNA, required for the assembly of 30S particles and may also be responsible for determining the conformation of the 16S rRNA at the A site. In Clostridium botulinum (strain Alaska E43 / Type E3), this protein is Small ribosomal subunit protein uS14.